The following is a 686-amino-acid chain: DNA gyrase subunit B (686 aa).

Positions 1-27 are enriched in polar residues; it reads MADSGNPNENNPSTDTGVNDAVSTSHG. The interval 1–29 is disordered; it reads MADSGNPNENNPSTDTGVNDAVSTSHGDA. Residues 465–579 enclose the Toprim domain; sequence CEIFIVEGDS…SGHVYLSRPP (115 aa). The Mg(2+) site is built by E471, D544, and D546.

This sequence belongs to the type II topoisomerase GyrB family. Heterotetramer, composed of two GyrA and two GyrB chains. In the heterotetramer, GyrA contains the active site tyrosine that forms a transient covalent intermediate with DNA, while GyrB binds cofactors and catalyzes ATP hydrolysis. It depends on Mg(2+) as a cofactor. Requires Mn(2+) as cofactor. Ca(2+) is required as a cofactor.

It localises to the cytoplasm. It carries out the reaction ATP-dependent breakage, passage and rejoining of double-stranded DNA.. In terms of biological role, a type II topoisomerase that negatively supercoils closed circular double-stranded (ds) DNA in an ATP-dependent manner to modulate DNA topology and maintain chromosomes in an underwound state. Negative supercoiling favors strand separation, and DNA replication, transcription, recombination and repair, all of which involve strand separation. Also able to catalyze the interconversion of other topological isomers of dsDNA rings, including catenanes and knotted rings. Type II topoisomerases break and join 2 DNA strands simultaneously in an ATP-dependent manner. The sequence is that of DNA gyrase subunit B from Streptomyces coelicolor (strain ATCC BAA-471 / A3(2) / M145).